The following is a 213-amino-acid chain: Na(+)-translocating NADH-quinone reductase subunit D (213 aa).

Helical transmembrane passes span 14-34 (ALWI…ALAV), 42-62 (LTMG…VSLL), 77-97 (IIIS…FFNI), 101-121 (LSVF…AESM), 131-151 (FLDG…ISII), 154-174 (LFGF…YASA), and 183-203 (LGLM…VWLV).

This sequence belongs to the NqrDE/RnfAE family. As to quaternary structure, composed of six subunits; NqrA, NqrB, NqrC, NqrD, NqrE and NqrF.

The protein resides in the cell inner membrane. It carries out the reaction a ubiquinone + n Na(+)(in) + NADH + H(+) = a ubiquinol + n Na(+)(out) + NAD(+). Its function is as follows. NQR complex catalyzes the reduction of ubiquinone-1 to ubiquinol by two successive reactions, coupled with the transport of Na(+) ions from the cytoplasm to the periplasm. NqrA to NqrE are probably involved in the second step, the conversion of ubisemiquinone to ubiquinol. This is Na(+)-translocating NADH-quinone reductase subunit D from Chlamydia muridarum (strain MoPn / Nigg).